The sequence spans 706 residues: Polyribonucleotide nucleotidyltransferase (706 aa).

Mg(2+)-binding residues include Asp486 and Asp492. Residues 553–612 (PRIYTMKINPEKIKDVIGKGGSVIRALTDETGTTIEIEDDGTIKIAATDGDKAKHAIRRI) enclose the KH domain. An S1 motif domain is found at 622 to 690 (NRIYAGKVTR…RQGRIRLSMK (69 aa)).

It belongs to the polyribonucleotide nucleotidyltransferase family. Component of the RNA degradosome, which is a multiprotein complex involved in RNA processing and mRNA degradation. It depends on Mg(2+) as a cofactor.

The protein resides in the cytoplasm. It carries out the reaction RNA(n+1) + phosphate = RNA(n) + a ribonucleoside 5'-diphosphate. Its function is as follows. Involved in mRNA degradation. Catalyzes the phosphorolysis of single-stranded polyribonucleotides processively in the 3'- to 5'-direction. The polypeptide is Polyribonucleotide nucleotidyltransferase (Yersinia enterocolitica serotype O:8 / biotype 1B (strain NCTC 13174 / 8081)).